The primary structure comprises 553 residues: Phospholipase-B 81 (553 aa).

The first 35 residues, 1–35 (MVRFGSAASSDNRRRRCWSWYWGGLLLLWAVAETR), serve as a signal peptide directing secretion. Asn69, Asn313, Asn416, and Asn531 each carry an N-linked (GlcNAc...) asparagine glycan.

It belongs to the phospholipase B-like family. Expressed by the venom gland.

The protein localises to the secreted. May cause hemolysis. The sequence is that of Phospholipase-B 81 from Drysdalia coronoides (White-lipped snake).